A 138-amino-acid chain; its full sequence is Cysteine desulfuration protein SufE (138 aa).

Catalysis depends on Cys51, which acts as the Cysteine persulfide intermediate.

It belongs to the SufE family. Homodimer. Interacts with SufS.

It is found in the cytoplasm. Its pathway is cofactor biosynthesis; iron-sulfur cluster biosynthesis. Participates in cysteine desulfuration mediated by SufS. Cysteine desulfuration mobilizes sulfur from L-cysteine to yield L-alanine and constitutes an essential step in sulfur metabolism for biosynthesis of a variety of sulfur-containing biomolecules. Functions as a sulfur acceptor for SufS, by mediating the direct transfer of the sulfur atom from the S-sulfanylcysteine of SufS, an intermediate product of cysteine desulfuration process. The sequence is that of Cysteine desulfuration protein SufE from Pectobacterium carotovorum subsp. carotovorum (strain PC1).